Reading from the N-terminus, the 117-residue chain is Pre-mRNA-splicing factor ini1 (117 aa).

Belongs to the PHF5 family.

It localises to the nucleus. Functionally, required for pre-mRNA splicing. In Schizosaccharomyces pombe (strain 972 / ATCC 24843) (Fission yeast), this protein is Pre-mRNA-splicing factor ini1 (ini1).